The chain runs to 35 residues: uncharacterized protein (35 aa).

The helical transmembrane segment at 10–30 threads the bilayer; sequence LMITASFFAIFIIIVVSVLLL.

The protein resides in the membrane. This is an uncharacterized protein from Salmonella paratyphi A (strain ATCC 9150 / SARB42).